A 78-amino-acid chain; its full sequence is UPF0401 protein YubL (78 aa).

It belongs to the UPF0401 family.

In Salmonella typhi, this protein is UPF0401 protein YubL (yubL).